Reading from the N-terminus, the 466-residue chain is Cysteine--tRNA ligase (466 aa).

Cysteine 28 contributes to the Zn(2+) binding site. The 'HIGH' region motif lies at 30–40 (PTVYNFFHIGN). Positions 208, 233, and 237 each coordinate Zn(2+). Residues 265 to 269 (KMSKS) carry the 'KMSKS' region motif. Lysine 268 lines the ATP pocket.

It belongs to the class-I aminoacyl-tRNA synthetase family. In terms of assembly, monomer. Zn(2+) serves as cofactor.

It localises to the cytoplasm. The enzyme catalyses tRNA(Cys) + L-cysteine + ATP = L-cysteinyl-tRNA(Cys) + AMP + diphosphate. The protein is Cysteine--tRNA ligase of Clostridium perfringens (strain 13 / Type A).